Reading from the N-terminus, the 658-residue chain is Threonine--tRNA ligase (658 aa).

Residues methionine 1 to threonine 64 enclose the TGS domain. The tract at residues aspartate 246–proline 549 is catalytic. Cysteine 343, histidine 394, and histidine 526 together coordinate Zn(2+).

This sequence belongs to the class-II aminoacyl-tRNA synthetase family. As to quaternary structure, homodimer. The cofactor is Zn(2+).

It localises to the cytoplasm. The enzyme catalyses tRNA(Thr) + L-threonine + ATP = L-threonyl-tRNA(Thr) + AMP + diphosphate + H(+). Catalyzes the attachment of threonine to tRNA(Thr) in a two-step reaction: L-threonine is first activated by ATP to form Thr-AMP and then transferred to the acceptor end of tRNA(Thr). Also edits incorrectly charged L-seryl-tRNA(Thr). This is Threonine--tRNA ligase from Mesorhizobium japonicum (strain LMG 29417 / CECT 9101 / MAFF 303099) (Mesorhizobium loti (strain MAFF 303099)).